Here is a 961-residue protein sequence, read N- to C-terminus: Vinculin (961 aa).

Tandem repeats lie at residues glutamate 258–leucine 362 and leucine 371–alanine 470. The tract at residues glutamate 258–alanine 470 is 2 X repeats. Residues alanine 720–aspartate 778 form a disordered region. The span at proline 723–proline 738 shows a compositional bias: pro residues. Threonine 774 carries the phosphothreonine modification.

This sequence belongs to the vinculin/alpha-catenin family. Exhibits self-association properties.

The protein resides in the cytoplasm. The protein localises to the cytoskeleton. It is found in the cell junction. Its subcellular location is the adherens junction. It localises to the cell membrane. In terms of biological role, involved in cell adhesion. May be involved in the attachment of the actin-based microfilaments to the plasma membrane. The chain is Vinculin (Vinc) from Drosophila melanogaster (Fruit fly).